The sequence spans 632 residues: MIEIGETMGDQPTNKIVFCERSWKAPVSILAFLILVTFAWGAYLLDNYDEDDYFRGSDDMSVGQFLVRNVAMPDVQRLYYTVPPAVVGVGGGGVNAGPVASGAIVGANGYVITTLHSVANVPDITVQVATSAGIRRFPAQVVKTIPGHNLALLKLQTTEKFLHFRMANIQTVVPGQQVFAFGRNMAGAPLVRQGMVQSSDAPLAVGTTQITHLLRSDAVYSWEQTGGPLVNAQGDLVGINIAATGPTGKVEGFTVPAQVIVSHLQDVVRFKTGGAAGVAPPAAQTVAMGSSSWWSKAKAVVGGPTAVPGMGMNVVQGTVTTGIPSGMPFVDTDHVGGAKIGGYSIADILGLGMLALAAGVTGGMMTMGGGVLQVAGMMVFFGYGMYLIRPVVFLTNVVVYGAAALRNDKAQLVQWDKVKPLIPWGVAGVVIGYFIGNAIGDSVVGVLLGLFALIMAGKAVLEILQPNAGEDTAEAIAAAEAGDEMDELMALAEGTTRPKTSGIALPEGPTRSAVLGLPMGLFSGILGISGGVIEVPLQRYIGRISLQNAIANSSVLVFWASVAGSVVAFIHGGSTGLIHWEAPVTLALVMIPGAYVGGILGARLMRVLPVRVLKGIYAATMAAIAIKMLTTV.

The chain crosses the membrane as a helical span at residues 25-45 (APVSILAFLILVTFAWGAYLL). Residues 78–268 (LYYTVPPAVV…VIVSHLQDVV (191 aa)) form a protease-like region. Positions 148 and 263 each coordinate a divalent metal cation. Helical transmembrane passes span 340-360 (IGGY…AAGV), 412-432 (LVQW…VVIG), 434-454 (FIGN…FALI), 513-533 (AVLG…GGVI), 550-570 (IANS…VAFI), 582-602 (APVT…ILGA), and 612-632 (VLKG…LTTV). A TSUP-like region spans residues 365–632 (MTMGGGVLQV…AIAIKMLTTV (268 aa)).

The protein in the N-terminal section; belongs to the peptidase S1C family. This sequence in the C-terminal section; belongs to the 4-toluene sulfonate uptake permease (TSUP) (TC 2.A.102) family. It depends on a metal cation as a cofactor. Post-translationally, subject to proteolytic cleavage by MamE.

Its subcellular location is the magnetosome membrane. Plays 2 roles; promotes magnetite nucleation/formation and activates the MamE protease. Despite its near conservation of a protease-like sequence, this is probably not a protease. Required in conjunction with MamP for proteolysis of at least MamE, itself and MamP. May transport a solute that controls MamE's protease activity. May place individual iron atoms into the magnetite lattice. One of 7 genes (mamLQBIEMO) able to induce magnetosome membrane biogenesis; coexpression of mamLQRBIEMO in a deletion of the 17 gene mamAB operon restores magnetosome vesicle formation but not magnetite biosynthesis. The sequence is that of Probable membrane transporter protein MamO from Magnetospirillum gryphiswaldense (strain DSM 6361 / JCM 21280 / NBRC 15271 / MSR-1).